Consider the following 188-residue polypeptide: UPF0200 protein M1627_1244 (188 aa).

15 to 22 (GMPGSGKS) contributes to the ATP binding site.

The protein belongs to the UPF0200 family.

This is UPF0200 protein M1627_1244 from Saccharolobus islandicus (strain M.16.27) (Sulfolobus islandicus).